Here is a 274-residue protein sequence, read N- to C-terminus: NH(3)-dependent NAD(+) synthetase (274 aa).

46–53 (GISGGQDS) provides a ligand contact to ATP. Asp52 contributes to the Mg(2+) binding site. Position 140 (Arg140) interacts with deamido-NAD(+). Residue Thr160 participates in ATP binding. Position 165 (Glu165) interacts with Mg(2+). Residues Lys173 and Asp180 each contribute to the deamido-NAD(+) site. ATP-binding residues include Lys189 and Thr211. Deamido-NAD(+) is bound at residue 260–261 (HK).

The protein belongs to the NAD synthetase family. In terms of assembly, homodimer.

The enzyme catalyses deamido-NAD(+) + NH4(+) + ATP = AMP + diphosphate + NAD(+) + H(+). Its pathway is cofactor biosynthesis; NAD(+) biosynthesis; NAD(+) from deamido-NAD(+) (ammonia route): step 1/1. Catalyzes the ATP-dependent amidation of deamido-NAD to form NAD. Uses ammonia as a nitrogen source. The protein is NH(3)-dependent NAD(+) synthetase of Streptococcus sanguinis (strain SK36).